We begin with the raw amino-acid sequence, 364 residues long: Nucleosome assembly protein 1;2 (364 aa).

Residues 32 to 86 (VESIKNTLQGLAARHTDVLESLEPKVRKRVEVLREIQSQHDDLEAKFFEERAALE) are a coiled coil. The Nuclear export signal motif lies at 53–68 (LEPKVRKRVEVLREIQ). Positions 227–232 (KKKPKK) match the Nuclear localization signal motif. 2 disordered regions span residues 250–269 (FNFF…DEDT) and 301–364 (GEAA…CKQQ). Composition is skewed to acidic residues over residues 259-269 (PDDDEEIDEDT) and 304-340 (AQDE…DDED). Residue Cys361 is modified to Cysteine methyl ester. The S-farnesyl cysteine moiety is linked to residue Cys361. Positions 362–364 (KQQ) are cleaved as a propeptide — removed in mature form.

This sequence belongs to the nucleosome assembly protein (NAP) family.

The protein resides in the nucleus. It is found in the cytoplasm. In terms of biological role, may modulate chromatin structure by regulation of nucleosome assembly/disassembly. This is Nucleosome assembly protein 1;2 (NAP1;2) from Oryza sativa subsp. japonica (Rice).